Consider the following 381-residue polypeptide: Pentraxin-related protein PTX3 (381 aa).

Residues 1-17 form the signal peptide; the sequence is MHLLAILFCALWSAVLA. 2 coiled-coil regions span residues 74 to 101 and 143 to 167; these read LQAT…SLAR and EEAG…HAVQ. 2 cysteine pairs are disulfide-bonded: Cys-179/Cys-357 and Cys-210/Cys-271. Positions 179–381 constitute a Pentraxin (PTX) domain; the sequence is CETAILFPMR…QPHGGAQYVS (203 aa). Asn-220 is a glycosylation site (N-linked (GlcNAc...) asparagine).

In terms of assembly, homooctamer; disulfide-linked. Binds to C1q. As to quaternary structure, (Microbial infection) Interacts with SARS coronavirus-2/SARS-CoV-2 Nucleoprotein and Spike protein homotrimer. In terms of processing, glycosylated.

The protein resides in the secreted. Plays a role in the regulation of innate resistance to pathogens, inflammatory reactions, possibly clearance of self-components and female fertility. This is Pentraxin-related protein PTX3 from Homo sapiens (Human).